Consider the following 530-residue polypeptide: UDP-glucuronosyltransferase 1A8 (530 aa).

Residues 1-25 form the signal peptide; that stretch reads MAPSGCPPSLPLCVCLFLASGFAQA. N71, N292, and N430 each carry an N-linked (GlcNAc...) asparagine glycan. The helical transmembrane segment at 488–504 threads the bilayer; it reads VIGFLLAIVLTVVFIVY.

Belongs to the UDP-glycosyltransferase family. In terms of assembly, homodimers. Homooligomer. Interacts with UGT1A1, UGT1A3, UGT1A4, UGT1A6, UGT1A7, UGT1A8, UGT1A9 and UGT1A10 to form heterodimers.

The protein resides in the endoplasmic reticulum membrane. The enzyme catalyses glucuronate acceptor + UDP-alpha-D-glucuronate = acceptor beta-D-glucuronoside + UDP + H(+). The catalysed reaction is 17beta-estradiol + UDP-alpha-D-glucuronate = 17beta-estradiol 3-O-(beta-D-glucuronate) + UDP + H(+). It carries out the reaction 17alpha-estradiol + UDP-alpha-D-glucuronate = 17alpha-estradiol 3-O-(beta-D-glucuronate) + UDP + H(+). It catalyses the reaction estrone + UDP-alpha-D-glucuronate = estrone 3-O-(beta-D-glucuronate) + UDP + H(+). The enzyme catalyses 16alpha,17alpha-estriol + UDP-alpha-D-glucuronate = 16alpha,17alpha-estriol 3-O-(beta-D-glucuronate) + UDP + H(+). The catalysed reaction is 2-hydroxy-17beta-estradiol + UDP-alpha-D-glucuronate = 2-hydroxy-17beta-estradiol 3-O-(beta-D-glucuronate) + UDP + H(+). It carries out the reaction 2-hydroxy-17beta-estradiol + UDP-alpha-D-glucuronate = 17beta-estradiol 2-O-(beta-D-glucuronate) + UDP + H(+). It catalyses the reaction 2-hydroxyestrone + UDP-alpha-D-glucuronate = 2-hydroxyestrone 3-O-(beta-D-glucuronate) + UDP + H(+). The enzyme catalyses 4-hydroxy-17beta-estradiol + UDP-alpha-D-glucuronate = 4-hydroxy-17beta-estradiol 3-O-(beta-D-glucuronate) + UDP + H(+). The catalysed reaction is 4-hydroxy-17beta-estradiol + UDP-alpha-D-glucuronate = 17beta-estradiol 4-O-(beta-D-glucuronate) + UDP + H(+). It carries out the reaction 4-hydroxyestrone + UDP-alpha-D-glucuronate = 4-hydroxyestrone 3-O-(beta-D-glucuronate) + UDP + H(+). It catalyses the reaction 4-hydroxyestrone + UDP-alpha-D-glucuronate = estrone 4-O-(beta-D-glucuronate) + UDP + H(+). The enzyme catalyses 2-methoxy-17beta-estradiol + UDP-alpha-D-glucuronate = 2-methoxy-17beta-estradiol 3-O-(beta-D-glucuronate) + UDP + H(+). The catalysed reaction is 2-methoxyestrone + UDP-alpha-D-glucuronate = 2-methoxyestrone 3-O-(beta-D-glucuronate) + UDP + H(+). It carries out the reaction 4-methoxy-17beta-estradiol + UDP-alpha-D-glucuronate = 4-methoxy-17beta-estradiol 3-O-(beta-D-glucuronate) + UDP + H(+). It catalyses the reaction 4-methoxyestrone + UDP-alpha-D-glucuronate = 4-methoxyestrone 3-O-(beta-D-glucuronate) + UDP + H(+). The enzyme catalyses 17beta-hydroxy-5alpha-androstan-3-one + UDP-alpha-D-glucuronate = 5alpha-dihydrotestosterone 17-O-(beta-D-glucuronate) + UDP + H(+). The catalysed reaction is 5alpha-dihydrotestosterone 17-O-(beta-D-glucuronate) + UDP-alpha-D-glucuronate = 5alpha-dihydrotestosterone 17-O-[beta-D-glucuronosyl-(1-&gt;2)-glucuronate] + UDP + H(+). It carries out the reaction prunetin + UDP-alpha-D-glucuronate = prunetin-4'-O-beta-D-glucuronide + UDP. It catalyses the reaction prunetin + UDP-alpha-D-glucuronate = prunetin-5-O-beta-D-glucuronide + UDP. The enzyme catalyses (E)-ferulate + UDP-alpha-D-glucuronate = (E)-4-O-(beta-D-glucuronosyl)-ferulate + UDP + H(+). The catalysed reaction is (E)-ferulate + UDP-alpha-D-glucuronate = (E)-ferulic acid beta-D-glucuronate ester + UDP. It carries out the reaction candesartan + UDP-alpha-D-glucuronate = candesartan O-beta-D-glucuronoside + UDP. It catalyses the reaction mycophenolate + UDP-alpha-D-glucuronate = mycophenolate 7-O-beta-D-glucuronide + UDP + H(+). In terms of biological role, UDP-glucuronosyltransferase (UGT) that catalyzes phase II biotransformation reactions in which lipophilic substrates are conjugated with glucuronic acid to increase the metabolite's water solubility, thereby facilitating excretion into either the urine or bile. Essential for the elimination and detoxification of drugs, xenobiotics and endogenous compounds. Catalyzes the glucuronidation of endogenous steroid hormones such as androgens and estrogens. Produces dihydrotestosterone (DHT) diglucuronide from the DHT after two subsequent glucoronidation steps. Involved in the glucuronidation of the phytochemical ferulic acid at the phenolic or the carboxylic acid group. Also catalyzes the glucuronidation of the isoflavones genistein, daidzein, glycitein, formononetin, biochanin A and prunetin, which are phytoestrogens with anticancer and cardiovascular properties. Involved in the glucuronidation of the AGTR1 angiotensin receptor antagonist caderastan, a drug which can inhibit the effect of angiotensin II. Also metabolizes mycophenolate, an immunosuppressive agent. This is UDP-glucuronosyltransferase 1A8 from Rattus norvegicus (Rat).